A 521-amino-acid polypeptide reads, in one-letter code: Cell cycle checkpoint protein hpr-9 (521 aa).

3 disordered regions span residues 1–20 (MQAIHENYTDNPSSSITRER), 318–375 (QHEE…NRFV), and 492–521 (GTETTSKMRMSQQFDKRLGPLVSDTQYESR). Polar residues-rich tracts occupy residues 355-370 (ESLSQEETTRSQSLPS) and 493-504 (TETTSKMRMSQQ).

Belongs to the rad9 family. As to quaternary structure, putative component of the toroidal 9-1-1 (RAD9-RAD1-HUS1) complex, composed of hpr-9, mrt-2 and hus-1.

May be a component of the 9-1-1 cell-cycle checkpoint response complex that plays a major role in DNA repair. The protein is Cell cycle checkpoint protein hpr-9 of Caenorhabditis elegans.